Here is a 157-residue protein sequence, read N- to C-terminus: Small ribosomal subunit protein uS7 (157 aa).

It belongs to the universal ribosomal protein uS7 family. Part of the 30S ribosomal subunit. Contacts proteins S9 and S11.

In terms of biological role, one of the primary rRNA binding proteins, it binds directly to 16S rRNA where it nucleates assembly of the head domain of the 30S subunit. Is located at the subunit interface close to the decoding center, probably blocks exit of the E-site tRNA. This chain is Small ribosomal subunit protein uS7, found in Chlamydia trachomatis serovar A (strain ATCC VR-571B / DSM 19440 / HAR-13).